The primary structure comprises 122 residues: Large ribosomal subunit protein uL14 (122 aa).

Belongs to the universal ribosomal protein uL14 family. In terms of assembly, part of the 50S ribosomal subunit. Forms a cluster with proteins L3 and L19. In the 70S ribosome, L14 and L19 interact and together make contacts with the 16S rRNA in bridges B5 and B8.

Functionally, binds to 23S rRNA. Forms part of two intersubunit bridges in the 70S ribosome. This is Large ribosomal subunit protein uL14 from Syntrophobacter fumaroxidans (strain DSM 10017 / MPOB).